A 431-amino-acid polypeptide reads, in one-letter code: Peptidase B (431 aa).

The Mn(2+) site is built by Lys-196 and Asp-201. Lys-208 is an active-site residue. 3 residues coordinate Mn(2+): Asp-219, Asp-278, and Glu-280. Arg-282 is a catalytic residue.

The protein belongs to the peptidase M17 family. As to quaternary structure, homohexamer. Mn(2+) is required as a cofactor.

It is found in the cytoplasm. The catalysed reaction is Release of an N-terminal amino acid, Xaa, from a peptide or arylamide. Xaa is preferably Glu or Asp but may be other amino acids, including Leu, Met, His, Cys and Gln.. Its function is as follows. Probably plays an important role in intracellular peptide degradation. This chain is Peptidase B, found in Vibrio atlanticus (strain LGP32) (Vibrio splendidus (strain Mel32)).